The chain runs to 131 residues: Ribosome-binding factor A (131 aa).

The protein belongs to the RbfA family. In terms of assembly, monomer. Binds 30S ribosomal subunits, but not 50S ribosomal subunits or 70S ribosomes.

The protein resides in the cytoplasm. Its function is as follows. One of several proteins that assist in the late maturation steps of the functional core of the 30S ribosomal subunit. Associates with free 30S ribosomal subunits (but not with 30S subunits that are part of 70S ribosomes or polysomes). Required for efficient processing of 16S rRNA. May interact with the 5'-terminal helix region of 16S rRNA. This Thermotoga maritima (strain ATCC 43589 / DSM 3109 / JCM 10099 / NBRC 100826 / MSB8) protein is Ribosome-binding factor A.